The following is a 567-amino-acid chain: WD repeat-containing protein 20 (567 aa).

The residue at position 2 (alanine 2) is an N-acetylalanine. 4 WD repeats span residues 147-187, 216-257, 258-297, and 345-389; these read IDKS…GTTA, VGEG…GTMK, SYFGGLLCLCWSPDGKYIVTGGEDDLVTVWSFLDCRVIAR, and STQS…LFPH. A phosphoserine mark is found at serine 355 and serine 358. The segment at 408–441 is disordered; sequence PAGSNGSAVTTPGNSVPPPLPRSNSLPHSAVSNA. Polar residues-rich tracts occupy residues 411-421 and 429-441; these read SNGSAVTTPGN and RSNSLPHSAVSNA. Serine 430, serine 432, and serine 463 each carry phosphoserine. Residues 468 to 481 show a composition bias toward basic residues; sequence KERHHEKDRKRNHS. The interval 468–493 is disordered; that stretch reads KERHHEKDRKRNHSMGHISSKSSDKL. One copy of the WD 5 repeat lies at 529 to 566; the sequence is IAHERLTVLVFLEDCIVTACQEGFICTWARPGKVSKFQ.

In terms of assembly, interacts with USP12; promotes translocation of USP12/WDR20 to the plasma membrane. Component of the USP12/WDR20/WDR48 deubiquitinating complex. Interacts with USP46; contributes to the cytoplasmic localization of the USP46/WDR20 complex. Component of the USP12/DMWD/WDR48 deubiquitinating complex.

The protein localises to the cytoplasm. Its subcellular location is the nucleus. Regulator of deubiquitinating complexes. Activates deubiquitinating activity of complexes containing USP12. Anchors at the base of the ubiquitin-contacting loop of USP12 and remotely modulates the catalytic center of the enzyme. Regulates shuttling of complexes containing USP12 between the plasma membrane, cytoplasm and nucleus. In Mus musculus (Mouse), this protein is WD repeat-containing protein 20 (Wdr20).